Consider the following 678-residue polypeptide: DNA mismatch repair protein MutL (678 aa).

It belongs to the DNA mismatch repair MutL/HexB family.

In terms of biological role, this protein is involved in the repair of mismatches in DNA. It is required for dam-dependent methyl-directed DNA mismatch repair. May act as a 'molecular matchmaker', a protein that promotes the formation of a stable complex between two or more DNA-binding proteins in an ATP-dependent manner without itself being part of a final effector complex. The chain is DNA mismatch repair protein MutL from Lactiplantibacillus plantarum (strain ATCC BAA-793 / NCIMB 8826 / WCFS1) (Lactobacillus plantarum).